Reading from the N-terminus, the 267-residue chain is 2-keto-3-deoxy-L-rhamnonate aldolase (267 aa).

His49 (proton acceptor) is an active-site residue. Position 151 (Gln151) interacts with substrate. Position 153 (Glu153) interacts with Mg(2+). Residues Ala178 and Asp179 each contribute to the substrate site. Asp179 contacts Mg(2+).

The protein belongs to the HpcH/HpaI aldolase family. KDR aldolase subfamily. In terms of assembly, homohexamer. The cofactor is Mg(2+). Ni(2+) serves as cofactor.

It catalyses the reaction 2-dehydro-3-deoxy-L-rhamnonate = (S)-lactaldehyde + pyruvate. It carries out the reaction D-glyceraldehyde + 3-hydroxypyruvate = (3R,4S,5R)-3,4,5,6-tetrahydroxy-2-oxohexanoate. The catalysed reaction is D-glyceraldehyde + 3-hydroxypyruvate = 2-dehydro-D-gluconate. The enzyme catalyses D-glyceraldehyde + 3-hydroxypyruvate = 2-dehydro-D-galactonate. It catalyses the reaction D-glyceraldehyde + pyruvate = 2-dehydro-3-deoxy-L-galactonate. It carries out the reaction 2-dehydro-3-deoxy-D-gluconate = D-glyceraldehyde + pyruvate. Catalyzes the reversible retro-aldol cleavage of 2-keto-3-deoxy-L-rhamnonate (KDR) to pyruvate and lactaldehyde. 2-keto-3-deoxy-L-mannonate, 2-keto-3-deoxy-L-lyxonate and 4-hydroxy-2-ketoheptane-1,7-dioate (HKHD) are also reasonably good substrates, although 2-keto-3-deoxy-L-rhamnonate is likely to be the physiological substrate. In vitro, can catalyze the aldolisation reaction between hydroxypyruvate (HPA) or pyruvate (PA) and D-glyceraldehyde (D-GA). The condensation of hydroxypyruvate and D-glyceraldehyde produces (3R,4S,5R)-3,4,5,6-tetrahydroxy-2-oxohexanoate as the major product, 2-dehydro-D-gluconate and 2-dehydro-D-galactonate. The condensation of pyruvate and D-glyceraldehyde produces 2-dehydro-3-deoxy-L-galactonate as the major product and 2-dehydro-3-deoxy-D-gluconate. The protein is 2-keto-3-deoxy-L-rhamnonate aldolase (rhmA) of Escherichia coli (strain K12).